Consider the following 348-residue polypeptide: N-acetyl-gamma-glutamyl-phosphate reductase (348 aa).

Residue Cys149 is part of the active site.

Belongs to the NAGSA dehydrogenase family. Type 1 subfamily.

Its subcellular location is the cytoplasm. The catalysed reaction is N-acetyl-L-glutamate 5-semialdehyde + phosphate + NADP(+) = N-acetyl-L-glutamyl 5-phosphate + NADPH + H(+). It participates in amino-acid biosynthesis; L-arginine biosynthesis; N(2)-acetyl-L-ornithine from L-glutamate: step 3/4. Functionally, catalyzes the NADPH-dependent reduction of N-acetyl-5-glutamyl phosphate to yield N-acetyl-L-glutamate 5-semialdehyde. This is N-acetyl-gamma-glutamyl-phosphate reductase from Cellvibrio japonicus (strain Ueda107) (Pseudomonas fluorescens subsp. cellulosa).